We begin with the raw amino-acid sequence, 235 residues long: Methylosome subunit pICln (235 aa).

Residues 1-21 (MSFLKSFPPPGSAEGLRQQQP) form a disordered region. The residue at position 2 (Ser2) is an N-acetylserine. Ser100, Ser142, Ser191, Ser193, Ser196, and Ser208 each carry phosphoserine. Residues 133-157 (LHPDPEDEDSDDYDGEEYDVEAHEQ) are disordered. Residues 137 to 151 (PEDEDSDDYDGEEYD) are compositionally biased toward acidic residues. The segment at 195 to 217 (SSQYNMAGVRTEDSTRDYEDGME) is disordered. A compositionally biased stretch (basic and acidic residues) spans 204–213 (RTEDSTRDYE). Thr221 is modified (phosphothreonine).

This sequence belongs to the pICln (TC 1.A.47) family. As to quaternary structure, component of the methylosome, a 20S complex containing at least PRMT5/SKB1, WDR77/MEP50 and CLNS1A/pICln. May mediate SNRPD1 and SNRPD3 methylation. Forms a 6S pICln-Sm complex composed of CLNS1A/pICln, SNRPD1, SNRPD2, SNRPE, SNRPF and SNRPG; ring-like structure where CLNS1A/pICln mimics additional Sm proteins and which is unable to assemble into the core snRNP. Interacts with LSM10 and LSM11.

The protein localises to the cytoplasm. The protein resides in the cytosol. Its subcellular location is the nucleus. It is found in the cytoskeleton. Functionally, involved in both the assembly of spliceosomal snRNPs and the methylation of Sm proteins. Chaperone that regulates the assembly of spliceosomal U1, U2, U4 and U5 small nuclear ribonucleoproteins (snRNPs), the building blocks of the spliceosome, and thereby plays an important role in the splicing of cellular pre-mRNAs. Most spliceosomal snRNPs contain a common set of Sm proteins SNRPB, SNRPD1, SNRPD2, SNRPD3, SNRPE, SNRPF and SNRPG that assemble in a heptameric protein ring on the Sm site of the small nuclear RNA to form the core snRNP (Sm core). In the cytosol, the Sm proteins SNRPD1, SNRPD2, SNRPE, SNRPF and SNRPG are trapped in an inactive 6S pICln-Sm complex by the chaperone CLNS1A that controls the assembly of the core snRNP. Dissociation by the SMN complex of CLNS1A from the trapped Sm proteins and their transfer to an SMN-Sm complex triggers the assembly of core snRNPs and their transport to the nucleus. The sequence is that of Methylosome subunit pICln (CLNS1A) from Canis lupus familiaris (Dog).